The sequence spans 38 residues: Photosystem II reaction center protein L (38 aa).

The helical transmembrane segment at 17–37 threads the bilayer; that stretch reads SLYFGLLLIFVLAVLFSSYIF.

This sequence belongs to the PsbL family. PSII is composed of 1 copy each of membrane proteins PsbA, PsbB, PsbC, PsbD, PsbE, PsbF, PsbH, PsbI, PsbJ, PsbK, PsbL, PsbM, PsbT, PsbX, PsbY, PsbZ, Psb30/Ycf12, at least 3 peripheral proteins of the oxygen-evolving complex and a large number of cofactors. It forms dimeric complexes.

The protein localises to the plastid. The protein resides in the chloroplast thylakoid membrane. Its function is as follows. One of the components of the core complex of photosystem II (PSII). PSII is a light-driven water:plastoquinone oxidoreductase that uses light energy to abstract electrons from H(2)O, generating O(2) and a proton gradient subsequently used for ATP formation. It consists of a core antenna complex that captures photons, and an electron transfer chain that converts photonic excitation into a charge separation. This subunit is found at the monomer-monomer interface and is required for correct PSII assembly and/or dimerization. In Chlamydomonas moewusii (Chlamydomonas eugametos), this protein is Photosystem II reaction center protein L.